Reading from the N-terminus, the 215-residue chain is MNSLFVLIKRELIVQNRINNIIKYLVIFFLFCIISTVLINSERDINKFGLIFSVICLLISLIGFSSVIFKSDLEDGSLELLLSIVSHEKIILAKFFAIFISSTIGLVFVLPIIYVLFDKTLLEIIFFFSSVWMILVLSSSLVVLSGSVQCYFKKNANFVGTFIMPLLIPNIIMTGLILQDNNLQLIFIMIGINLVFLPISFFLSSCLIKNIYNIT.

Transmembrane regions (helical) follow at residues 21-40 (IIKYLVIFFLFCIISTVLIN), 50-69 (LIFSVICLLISLIGFSSVIF), 95-117 (FFAIFISSTIGLVFVLPIIYVLF), 122-144 (LEIIFFFSSVWMILVLSSSLVVL), 156-178 (ANFVGTFIMPLLIPNIIMTGLIL), and 183-205 (LQLIFIMIGINLVFLPISFFLSS).

It belongs to the CcmB/CycW/HelB family.

It is found in the cell membrane. This is an uncharacterized protein from Rickettsia conorii (strain ATCC VR-613 / Malish 7).